Here is a 482-residue protein sequence, read N- to C-terminus: MTPARVLAVASEVYPIVKTGGLADVAGALPIALKAHGVEMRTLMPGYPDVMRLLSGAEEIRRWPDYFGGPGRLLAGAHDGLDLFVLDVPHLYARPGNPYVTTEGVDWPDNGVRFAALSRVAADIGHGLVPAFVPDIVHAHDWQAGLAPAYLHYDNRPRPGTVMTIHNMAYQGKFAPELIGAIGLPWSSFDVNGLEYFGGISFLKAGLQFADRITTVSPTYAREIQSDEGGMGLGGLLRARAGALSGILNGIDIAVWNPQTDSHIAYRFGAEDLTFRAANKAVLQQQFNLDSSDEAPLLGVISRLSWQKGLDLLLEAIPTILGEGMQLALLGSGDRDLQDRYQAAARANPGRIGVVIGYDEILAHLIQAGSDALIVPSRFEPCGLTQLCALRYGAVPIVSRVGGLEDTIVDIGEAGREATGFKFGPVTADALAGTLRKANTAFHDKLTWRQLQRNGLATDVSWRSRAGDYAALYRSLIESRRA.

Residue K18 coordinates ADP-alpha-D-glucose.

The protein belongs to the glycosyltransferase 1 family. Bacterial/plant glycogen synthase subfamily.

It catalyses the reaction [(1-&gt;4)-alpha-D-glucosyl](n) + ADP-alpha-D-glucose = [(1-&gt;4)-alpha-D-glucosyl](n+1) + ADP + H(+). Its pathway is glycan biosynthesis; glycogen biosynthesis. In terms of biological role, synthesizes alpha-1,4-glucan chains using ADP-glucose. This is Glycogen synthase 2 from Bradyrhizobium diazoefficiens (strain JCM 10833 / BCRC 13528 / IAM 13628 / NBRC 14792 / USDA 110).